Consider the following 407-residue polypeptide: Putative two-component response regulator ARR19 (407 aa).

The region spanning 35 to 150 (NVLVVDTNFT…VMANIWQHIV (116 aa)) is the Response regulatory domain. Asp-86 carries the 4-aspartylphosphate modification. Residues 214–217 (RKPR) carry the Nuclear localization signal motif. Positions 217–271 (RMTWTEELHQKFLEAIEIIGGIEKANPKVLVECLQEMRIEGITRSNVASHLQKHR) form a DNA-binding region, myb-like GARP.

The protein belongs to the ARR family. Type-B subfamily. In terms of assembly, binds the target DNA as a monomer. Post-translationally, two-component system major event consists of a His-to-Asp phosphorelay between a sensor histidine kinase (HK) and a response regulator (RR). In plants, the His-to-Asp phosphorelay involves an additional intermediate named Histidine-containing phosphotransfer protein (HPt). This multistep phosphorelay consists of a His-Asp-His-Asp sequential transfer of a phosphate group between first a His and an Asp of the HK protein, followed by the transfer to a conserved His of the HPt protein and finally the transfer to an Asp in the receiver domain of the RR protein. As to expression, detected in trichomes and siliques.

The protein resides in the nucleus. Its function is as follows. Putative transcriptional activator that binds specifically to the DNA sequence 5'-[AG]GATT-3'. Functions as a response regulator involved in His-to-Asp phosphorelay signal transduction system. Phosphorylation of the Asp residue in the receiver domain activates the ability of the protein to promote the transcription of target genes. Could directly activate some type-A response regulators in response to cytokinins. The protein is Putative two-component response regulator ARR19 (ARR19) of Arabidopsis thaliana (Mouse-ear cress).